The following is a 427-amino-acid chain: Protein king tubby 1 (427 aa).

Residues 48–174 (SPSNPDQIIS…ASGHNDAEGD (127 aa)) form a disordered region. Residues 57–86 (SSSGSPTTVTATGTGTTTTTGSVTTTPTSP) show a composition bias toward low complexity.

It belongs to the TUB family.

Its subcellular location is the cytoplasm. It is found in the nucleus. This is Protein king tubby 1 (king-tubby1) from Culex quinquefasciatus (Southern house mosquito).